The chain runs to 740 residues: Elongation factor 2 (740 aa).

The tr-type G domain maps to 23–264 (AQIRNAGTLA…MIIEHVPPPN (242 aa)). GTP-binding positions include 32–39 (AHVDHGKT), 98–102 (DTPGH), and 152–155 (NKID). At histidine 605 the chain carries Diphthamide.

This sequence belongs to the TRAFAC class translation factor GTPase superfamily. Classic translation factor GTPase family. EF-G/EF-2 subfamily.

It is found in the cytoplasm. Functionally, catalyzes the GTP-dependent ribosomal translocation step during translation elongation. During this step, the ribosome changes from the pre-translocational (PRE) to the post-translocational (POST) state as the newly formed A-site-bound peptidyl-tRNA and P-site-bound deacylated tRNA move to the P and E sites, respectively. Catalyzes the coordinated movement of the two tRNA molecules, the mRNA and conformational changes in the ribosome. This Pyrobaculum islandicum (strain DSM 4184 / JCM 9189 / GEO3) protein is Elongation factor 2.